A 350-amino-acid chain; its full sequence is MEVRHNWTVAEVQTLMDKPFMDLIFEAQLVHRKYQQANHVQVSTLLSIKTGACPEDCKYCPQSAHYRTDVDRERLMEVESVLDAAKKAKNSGSTRFCMGAAWKNPKERDMPYLLDMIKGVKEMGLETCMTLGMITADQAGELSEAGLDYYNHNLDTSPEFYGNIITTRTYQDRLDTLSHVRDAGMKICSGGIIGMGESASDRAGLFVELANLPQHPESVPVNMLVKVKGTPLEDAEDVDPFDFIRLIAVARIMMPESAVRLSAGRESMNEQMQALCFMAGANSVFYGCKLLTTPNPDEDTDMQLFKKLGVNSEQVAQKPDQIQEHELLDRVAERVAARPNKDDLFYEASV.

Residues 38–256 enclose the Radical SAM core domain; that stretch reads NHVQVSTLLS…IAVARIMMPE (219 aa). Residues cysteine 53, cysteine 57, and cysteine 60 each contribute to the [4Fe-4S] cluster site. [2Fe-2S] cluster-binding residues include cysteine 97, cysteine 128, cysteine 188, and arginine 260.

It belongs to the radical SAM superfamily. Biotin synthase family. As to quaternary structure, homodimer. Requires [4Fe-4S] cluster as cofactor. [2Fe-2S] cluster serves as cofactor.

The enzyme catalyses (4R,5S)-dethiobiotin + (sulfur carrier)-SH + 2 reduced [2Fe-2S]-[ferredoxin] + 2 S-adenosyl-L-methionine = (sulfur carrier)-H + biotin + 2 5'-deoxyadenosine + 2 L-methionine + 2 oxidized [2Fe-2S]-[ferredoxin]. It participates in cofactor biosynthesis; biotin biosynthesis; biotin from 7,8-diaminononanoate: step 2/2. Its function is as follows. Catalyzes the conversion of dethiobiotin (DTB) to biotin by the insertion of a sulfur atom into dethiobiotin via a radical-based mechanism. In Aliivibrio fischeri (strain ATCC 700601 / ES114) (Vibrio fischeri), this protein is Biotin synthase.